A 2633-amino-acid chain; its full sequence is Non-reducing polyketide synthase sor2 (2633 aa).

Residues 67 to 237 (VSNAQKLAEW…TTSTRTVAAL (171 aa)) form an N-terminal acylcarrier protein transacylase domain (SAT) region. C140 (nucleophile; for transacylase activity) is an active-site residue. H258 functions as the Proton donor/acceptor; for transacylase activity in the catalytic mechanism. The 426-residue stretch at 389–814 (ENDIAVIGMA…GSNASVIIKQ (426 aa)) folds into the Ketosynthase family 3 (KS3) domain. Residues C561, H696, and H737 each act as for beta-ketoacyl synthase activity in the active site. The segment at 928–1239 (CFGGQVSTFV…SKASSQLSDV (312 aa)) is malonyl-CoA:ACP transacylase (MAT) domain. The interval 1307–1437 (PQPVGLYTLL…GQLHFQASDD (131 aa)) is N-terminal hotdog fold. Residues 1307 to 1627 (PQPVGLYTLL…YAPVSLDQLF (321 aa)) enclose the PKS/mFAS DH domain. The tract at residues 1338–1509 (MSDHAIGKAQ…SNESAGRLVR (172 aa)) is product template (PT) domain. A C-terminal hotdog fold region spans residues 1464–1627 (GRSDEVIQGQ…YAPVSLDQLF (164 aa)). Positions 1684 to 1758 (EELWLRLRPV…GILKFLQSTL (75 aa)) constitute a Carrier domain. At S1718 the chain carries O-(pantetheine 4'-phosphoryl)serine. Residues 1762 to 1792 (DVHDSSETMSTVSSDGNVHSPPTSGSEMASP) are disordered. Over residues 1768–1790 (ETMSTVSSDGNVHSPPTSGSEMA) the composition is skewed to polar residues. The segment at 1982 to 2166 (FELMADFLTR…ASGFKHVRWT (185 aa)) is methyltransferase domain. An NADPH-binding (R) domain region spans residues 2253-2495 (VTGATGSLGS…TLRALPDVDG (243 aa)).

Pantetheine 4'-phosphate serves as cofactor.

It participates in secondary metabolite biosynthesis. Its function is as follows. Non-reducing polyketide synthase; part of the SOR gene cluster that mediates the biosynthesis of sorbicillinoids, a diverse group of yellow secondary metabolites that restrict growth of competing pathogenic fungi but not of bacteria. Sorbicillinoids biosynthesis requires the action of two PKSs. The SOR cluster is required for the production of trichodimerol and dihydrotrichotetronin, with sor2 being sufficient for production of trichodimerol, but not dihydrotrichotetronin in the light. Sor1 iteratively combines three acetyl units and the growing chain is modified by the ketoacyl reductase subunit, and optional by the enoyl reductase subunit in the second cycle. The polyketide is then handed over to the PKS sor2, which adds three more acetyl units, and two methyl groups. Sor2 releases an aldehyde, which undergoes spontaneous cyclization resulting in the formation of sorbicillin or 2',3'-dihydrosorbicillin. The monooxygenase sor5 oxidizes sorbicillin and 2',3'-dihydrosorbicillin to 2',3'-dihydrosorbicillinol and sorbicillinol, respectively. The oxidoreductase sor8 further converts sorbicillinol into oxosorbicillinol. Sorbicillinol is the building block for the other sorbicillinoids such as disorbicillinol, bisvertinolon, dihydrobisvertinolone, and dihydrotrichotetronine. This Hypocrea jecorina (strain QM6a) (Trichoderma reesei) protein is Non-reducing polyketide synthase sor2.